The sequence spans 92 residues: Defensin Lucifensin (92 aa).

Residues 1–23 (MKFFMVFAVTFCLALSFVSQSLA) form the signal peptide. Residues 24–52 (LPADDEAHFVDGLEALKTIEPELHGRYKR) constitute a propeptide that is removed on maturation. Disulfide bonds link cysteine 55-cysteine 82, cysteine 68-cysteine 88, and cysteine 72-cysteine 90.

The protein belongs to the invertebrate defensin family. Type 1 subfamily. In terms of processing, the disulfide bonds are essential for antimicrobial activity. In terms of tissue distribution, larval fat body, hemolymph and salivary glands (at protein level). Expressed in the salivary glands of all larval stages.

Its subcellular location is the secreted. The protein resides in the host cell membrane. Its function is as follows. Shows strong antibacterial activity against numerous Gram-positive bacteria. It selectively inhibits peptidoglycan biosynthesis through complex formation with the cell wall precursor lipid II (1:1 molar ratio) thus inhibiting cell wall synthesis. Shows antibacterial activity against the Gram-positive bacteria M.luteus, E.fecalis (MIC=32 mg/L), S.aureus (MIC=16 mg/L), S.carnosus (MIC=2 mg/L), S.pneumoniae (MIC=2 mg/L) and S.pyogenes (MIC=2 mg/L) and against a number of methicillin-resistant S.aureus and glycopeptide-intermediate S.aureus isolates. Does not show antibacterial activity against Gram-negative bacteria or antifungal activity against C.utilis. Shows slight antifungal activity against C.albicans. The polypeptide is Defensin Lucifensin (Lucilia sericata (Green bottle fly)).